A 143-amino-acid chain; its full sequence is Late embryogenesis abundant protein 1 (143 aa).

Residues 1–17 (MSSQQNQNRQGEQQEQG) are compositionally biased toward low complexity. The disordered stretch occupies residues 1–143 (MSSQQNQNRQ…QAGEKVKGRD (143 aa)). Repeat copies occupy residues 47 to 57 (KTAEFRDSAGE), 69 to 79 (KGQEFKERAGE), 80 to 90 (KAEETKQRAGE), and 91 to 101 (KMDETKQRAGE). Composition is skewed to basic and acidic residues over residues 47 to 60 (KTAEFRDSAGETIR) and 69 to 143 (KGQE…KGRD). The segment at 47-101 (KTAEFRDSAGETIRDLTGQAQEKGQEFKERAGEKAEETKQRAGEKMDETKQRAGE) is 4 X 11 AA approximate repeats.

The protein belongs to the LEA type 4 family.

Functionally, may be involved in defense against water stress. The chain is Late embryogenesis abundant protein 1 from Aphelenchoides avenae (Mycophagous nematode worm).